The sequence spans 334 residues: BTB and MATH domain-containing protein 39 (334 aa).

An MATH domain is found at 14-141 (IVTLVFNIYN…EGRFQIEFDL (128 aa)). In terms of domain architecture, BTB spans 164–229 (ADGELITDGK…LQLDSFEVSV (66 aa)).

The protein is BTB and MATH domain-containing protein 39 (bath-39) of Caenorhabditis elegans.